We begin with the raw amino-acid sequence, 90 residues long: Cell division topological specificity factor (90 aa).

This sequence belongs to the MinE family.

Its function is as follows. Prevents the cell division inhibition by proteins MinC and MinD at internal division sites while permitting inhibition at polar sites. This ensures cell division at the proper site by restricting the formation of a division septum at the midpoint of the long axis of the cell. The protein is Cell division topological specificity factor of Bordetella avium (strain 197N).